The sequence spans 436 residues: Methylenetetrahydrofolate--tRNA-(uracil-5-)-methyltransferase TrmFO (436 aa).

10–15 (GAGLAG) is an FAD binding site.

It belongs to the MnmG family. TrmFO subfamily. It depends on FAD as a cofactor.

It localises to the cytoplasm. It carries out the reaction uridine(54) in tRNA + (6R)-5,10-methylene-5,6,7,8-tetrahydrofolate + NADH + H(+) = 5-methyluridine(54) in tRNA + (6S)-5,6,7,8-tetrahydrofolate + NAD(+). It catalyses the reaction uridine(54) in tRNA + (6R)-5,10-methylene-5,6,7,8-tetrahydrofolate + NADPH + H(+) = 5-methyluridine(54) in tRNA + (6S)-5,6,7,8-tetrahydrofolate + NADP(+). In terms of biological role, catalyzes the folate-dependent formation of 5-methyl-uridine at position 54 (M-5-U54) in all tRNAs. The sequence is that of Methylenetetrahydrofolate--tRNA-(uracil-5-)-methyltransferase TrmFO from Staphylococcus carnosus (strain TM300).